Consider the following 788-residue polypeptide: Endonuclease MutS2 (788 aa).

332–339 (GPNTGGKT) provides a ligand contact to ATP. The 76-residue stretch at 713-788 (VDLRGMDAEE…GTGVTVVELK (76 aa)) folds into the Smr domain.

The protein belongs to the DNA mismatch repair MutS family. MutS2 subfamily. Homodimer. Binds to stalled ribosomes, contacting rRNA.

In terms of biological role, endonuclease that is involved in the suppression of homologous recombination and thus may have a key role in the control of bacterial genetic diversity. Its function is as follows. Acts as a ribosome collision sensor, splitting the ribosome into its 2 subunits. Detects stalled/collided 70S ribosomes which it binds and splits by an ATP-hydrolysis driven conformational change. Acts upstream of the ribosome quality control system (RQC), a ribosome-associated complex that mediates the extraction of incompletely synthesized nascent chains from stalled ribosomes and their subsequent degradation. Probably generates substrates for RQC. The protein is Endonuclease MutS2 of Clostridium botulinum (strain Okra / Type B1).